A 159-amino-acid polypeptide reads, in one-letter code: Cyanate hydratase (159 aa).

Residues arginine 103, glutamate 106, and serine 129 contribute to the active site.

This sequence belongs to the cyanase family.

The catalysed reaction is cyanate + hydrogencarbonate + 3 H(+) = NH4(+) + 2 CO2. Catalyzes the reaction of cyanate with bicarbonate to produce ammonia and carbon dioxide. The polypeptide is Cyanate hydratase (Blastomyces gilchristii (strain SLH14081) (Blastomyces dermatitidis)).